The sequence spans 159 residues: NADH-quinone oxidoreductase subunit I (159 aa).

2 4Fe-4S ferredoxin-type domains span residues 51 to 80 (RRYE…IEAD) and 90 to 119 (TRYD…EGPN). [4Fe-4S] cluster-binding residues include Cys-60, Cys-63, Cys-66, Cys-70, Cys-99, Cys-102, Cys-105, and Cys-109.

The protein belongs to the complex I 23 kDa subunit family. As to quaternary structure, NDH-1 is composed of 14 different subunits. Subunits NuoA, H, J, K, L, M, N constitute the membrane sector of the complex. [4Fe-4S] cluster serves as cofactor.

It localises to the cell inner membrane. It catalyses the reaction a quinone + NADH + 5 H(+)(in) = a quinol + NAD(+) + 4 H(+)(out). Its function is as follows. NDH-1 shuttles electrons from NADH, via FMN and iron-sulfur (Fe-S) centers, to quinones in the respiratory chain. The immediate electron acceptor for the enzyme in this species is believed to be ubiquinone. Couples the redox reaction to proton translocation (for every two electrons transferred, four hydrogen ions are translocated across the cytoplasmic membrane), and thus conserves the redox energy in a proton gradient. The sequence is that of NADH-quinone oxidoreductase subunit I from Rickettsia felis (strain ATCC VR-1525 / URRWXCal2) (Rickettsia azadi).